The following is a 208-amino-acid chain: Outer-membrane lipoprotein carrier protein (208 aa).

The first 25 residues, 1–25, serve as a signal peptide directing secretion; that stretch reads MKKLFSAKLFSALVLSFSLFSTAHA.

The protein belongs to the LolA family. In terms of assembly, monomer.

Its subcellular location is the periplasm. In terms of biological role, participates in the translocation of lipoproteins from the inner membrane to the outer membrane. Only forms a complex with a lipoprotein if the residue after the N-terminal Cys is not an aspartate (The Asp acts as a targeting signal to indicate that the lipoprotein should stay in the inner membrane). The protein is Outer-membrane lipoprotein carrier protein of Vibrio campbellii (strain ATCC BAA-1116).